The following is a 263-amino-acid chain: Chaperone protein ClpE (263 aa).

Residues 1–34 form the signal peptide; sequence MSKRNAVTTFFTNRVTKALGMTLALMMTCQSAMA. The segment covering 238-255 has biased composition (polar residues); sequence QKKTPTSSGQKASDSLVN. Positions 238-263 are disordered; it reads QKKTPTSSGQKASDSLVNPSDKADKK.

Belongs to the periplasmic pilus chaperone family.

It is found in the periplasm. Functionally, involved in the biogenesis of the CS31A capsule-like antigen. This Escherichia coli protein is Chaperone protein ClpE (clpE).